The sequence spans 126 residues: uncharacterized protein (126 aa).

Helical transmembrane passes span 4 to 24 (LIIA…VNIL), 42 to 62 (AITI…IINP), and 64 to 84 (ISAS…SYTV).

Its subcellular location is the membrane. This is an uncharacterized protein from Saccharomyces cerevisiae (strain ATCC 204508 / S288c) (Baker's yeast).